A 382-amino-acid chain; its full sequence is ATP phosphoribosyltransferase regulatory subunit (382 aa).

It belongs to the class-II aminoacyl-tRNA synthetase family. HisZ subfamily. Heteromultimer composed of HisG and HisZ subunits.

It is found in the cytoplasm. The protein operates within amino-acid biosynthesis; L-histidine biosynthesis; L-histidine from 5-phospho-alpha-D-ribose 1-diphosphate: step 1/9. Required for the first step of histidine biosynthesis. May allow the feedback regulation of ATP phosphoribosyltransferase activity by histidine. In Albidiferax ferrireducens (strain ATCC BAA-621 / DSM 15236 / T118) (Rhodoferax ferrireducens), this protein is ATP phosphoribosyltransferase regulatory subunit.